The primary structure comprises 450 residues: tRNA-2-methylthio-N(6)-dimethylallyladenosine synthase (450 aa).

The 119-residue stretch at 14–132 (GEFFIETWGC…FPNYLNEVKK (119 aa)) folds into the MTTase N-terminal domain. 6 residues coordinate [4Fe-4S] cluster: cysteine 23, cysteine 59, cysteine 93, cysteine 169, cysteine 173, and cysteine 176. The Radical SAM core domain occupies 155-385 (RKNSMKAFVT…VEVVNEISAK (231 aa)). The region spanning 388-450 (KAYEGKIEEV…NSFSLTGEEI (63 aa)) is the TRAM domain.

This sequence belongs to the methylthiotransferase family. MiaB subfamily. As to quaternary structure, monomer. [4Fe-4S] cluster serves as cofactor.

It is found in the cytoplasm. The catalysed reaction is N(6)-dimethylallyladenosine(37) in tRNA + (sulfur carrier)-SH + AH2 + 2 S-adenosyl-L-methionine = 2-methylsulfanyl-N(6)-dimethylallyladenosine(37) in tRNA + (sulfur carrier)-H + 5'-deoxyadenosine + L-methionine + A + S-adenosyl-L-homocysteine + 2 H(+). Functionally, catalyzes the methylthiolation of N6-(dimethylallyl)adenosine (i(6)A), leading to the formation of 2-methylthio-N6-(dimethylallyl)adenosine (ms(2)i(6)A) at position 37 in tRNAs that read codons beginning with uridine. This chain is tRNA-2-methylthio-N(6)-dimethylallyladenosine synthase, found in Clostridium botulinum (strain Langeland / NCTC 10281 / Type F).